The primary structure comprises 623 residues: Heterogeneous nuclear ribonucleoprotein Q (623 aa).

N-acetylalanine is present on A2. The residue at position 159 (S159) is a Phosphoserine. RRM domains lie at 162–241, 243–325, and 338–408; these read TEIF…ISVA, NRLF…WADP, and KVLF…FAKP. A Glycyl lysine isopeptide (Lys-Gly) (interchain with G-Cter in SUMO2) cross-link involves residue K168. K221 carries the N6-acetyllysine modification. K363 is subject to N6-acetyllysine. At Y373 the chain carries Phosphotyrosine. An interaction with APOBEC1 region spans residues 400 to 561; that stretch reads NIEIVFAKPP…GARGGRGGNV (162 aa). An Asymmetric dimethylarginine; by PRMT1; alternate modification is found at R444. Residue R444 is modified to Omega-N-methylarginine; by PRMT1; alternate. Tandem repeats lie at residues 448 to 450, 451 to 453, 460 to 464, 469 to 472, 478 to 480, and 485 to 488. The segment at 448 to 559 is 8 X 3 AA repeats of R-G-G; it reads RGGRGGYGYP…VRGARGGRGG (112 aa). The segment at 460–488 is 3 X 4 AA repeats of Y-Y-G-Y; it reads YYGYEDYYDYYGYDYHNYRGGYEDPYYGY. R496 carries the omega-N-methylarginine; by PRMT1 modification. Positions 497-623 are disordered; it reads GRGGRGARGA…YQDTFGQQWK (127 aa). One copy of the 1-4 repeat lies at 498-500; the sequence is RGG. Residues 504–522 show a composition bias toward low complexity; the sequence is RGAAPSRGRGAAPPRGRAG. R510 is modified (asymmetric dimethylarginine; by PRMT1). 4 positions are modified to asymmetric dimethylarginine; by PRMT1; alternate: R518, R526, R536, and R539. Omega-N-methylarginine; by PRMT1; alternate is present on residues R518, R526, R536, and R539. Residues 518 to 549 form an interaction with SMN region; that stretch reads RGRAGYSQRGGPGSARGVRGARGGAQQQRGRG. One copy of the 1-5 repeat lies at 526 to 528; the sequence is RGG. 3 tandem repeats follow at residues 539–541, 554–556, and 557–559. Gly residues predominate over residues 550–562; the sequence is VRGARGGRGGNVG. Positions 564 to 578 match the Bipartite nuclear localization signal motif; sequence KRKADGYNQPDSKRR. Over residues 580 to 595 the composition is skewed to polar residues; that stretch reads TNNQNWGSQPIAQQPL. The residue at position 587 (S587) is a Phosphoserine. Residue K607 forms a Glycyl lysine isopeptide (Lys-Gly) (interchain with G-Cter in SUMO2) linkage. The span at 611–623 shows a compositional bias: polar residues; the sequence is QEFYQDTFGQQWK.

As to quaternary structure, isoform 1 is a component of the APOB mRNA editosome complex and interacts with APOBEC1 and A1CF (APOBEC1 complementation factor). Part of a complex associated with the FOS mCRD domain and consisting of PABPC1, PAIP1, CSDE1/UNR, HNRPD and SYNCRIP. Isoform 3 interacts with HNRPR. Interacts with POLR2A hyperphosphorylated C-terminal domain. Isoform 1, isoform 2 and isoform 3 interact with SMN. Isoform 3 interacts through its C-terminal domain with SYT7, SYT8 and SYT9. The non-phosphorylated and phosphorylated forms are colocalized with PAIP1 in polysomes. Interacts with HABP4. Identified in a histone pre-mRNA complex, at least composed of ERI1, LSM11, SLBP, SNRPB, SYNCRIP and YBX1. Identified in the spliceosome C complex. Component of the coding region determinant (CRD)-mediated complex, composed of DHX9, HNRNPU, IGF2BP1, SYNCRIP and YBX1. Identified in a mRNP complex, at least composed of DHX9, DDX3X, ELAVL1, HNRNPU, IGF2BP1, ILF3, PABPC1, PCBP2, PTBP2, STAU1, STAU2, SYNCRIP and YBX1. Identified in a mRNP granule complex, at least composed of ACTB, ACTN4, DHX9, ERG, HNRNPA1, HNRNPA2B1, HNRNPAB, HNRNPD, HNRNPL, HNRNPR, HNRNPU, HSPA1, HSPA8, IGF2BP1, ILF2, ILF3, NCBP1, NCL, PABPC1, PABPC4, PABPN1, RPLP0, RPS3, RPS3A, RPS4X, RPS8, RPS9, SYNCRIP, YBX1 and untranslated mRNAs. Interacts with GTPBP1. Component of the GAIT complex; in humans the complex assembly seems to be a two-step process in which EPRS1 first associates with SYNCRIP to form a pre-GAIT complex which is deficient in GAIT element binding. In terms of assembly, (Microbial infection) Interacts with minute virus of mice (MVM) NS1 protein. (Microbial infection) Interacts with herpes virus 8/HHV-8 protein vIRF-1; this interaction induces ubiquitination and degradation of SYNCRIP. In terms of processing, phosphorylated on tyrosine. The membrane-bound form found in microsomes is phosphorylated in vitro by insulin receptor tyrosine kinase (INSR). Phosphorylation is inhibited upon binding to RNA, whereas the cytoplasmic form is poorly phosphorylated. Ubiquitously expressed. Detected in heart, brain, pancreas, placenta, spleen, lung, liver, skeletal muscle, kidney, thymus, prostate, uterus, small intestine, colon, peripheral blood and testis.

The protein resides in the cytoplasm. The protein localises to the microsome. Its subcellular location is the endoplasmic reticulum. It is found in the nucleus. It localises to the nucleoplasm. Its function is as follows. Heterogenous nuclear ribonucleoprotein (hnRNP) implicated in mRNA processing mechanisms. Component of the CRD-mediated complex that promotes MYC mRNA stability. Isoform 1, isoform 2 and isoform 3 are associated in vitro with pre-mRNA, splicing intermediates and mature mRNA protein complexes. Isoform 1 binds to apoB mRNA AU-rich sequences. Isoform 1 is part of the APOB mRNA editosome complex and may modulate the postranscriptional C to U RNA-editing of the APOB mRNA through either by binding to A1CF (APOBEC1 complementation factor), to APOBEC1 or to RNA itself. May be involved in translationally coupled mRNA turnover. Implicated with other RNA-binding proteins in the cytoplasmic deadenylation/translational and decay interplay of the FOS mRNA mediated by the major coding-region determinant of instability (mCRD) domain. Interacts in vitro preferentially with poly(A) and poly(U) RNA sequences. Isoform 3 may be involved in cytoplasmic vesicle-based mRNA transport through interaction with synaptotagmins. Component of the GAIT (gamma interferon-activated inhibitor of translation) complex which mediates interferon-gamma-induced transcript-selective translation inhibition in inflammation processes. Upon interferon-gamma activation assembles into the GAIT complex which binds to stem loop-containing GAIT elements in the 3'-UTR of diverse inflammatory mRNAs (such as ceruplasmin) and suppresses their translation; seems not to be essential for GAIT complex function. This chain is Heterogeneous nuclear ribonucleoprotein Q (SYNCRIP), found in Homo sapiens (Human).